The primary structure comprises 339 residues: Uroporphyrinogen decarboxylase (339 aa).

Substrate-binding positions include 21 to 25 (RQAGR), Asp71, Tyr147, Ser202, and His315.

The protein belongs to the uroporphyrinogen decarboxylase family. As to quaternary structure, homodimer.

The protein localises to the cytoplasm. The enzyme catalyses uroporphyrinogen III + 4 H(+) = coproporphyrinogen III + 4 CO2. Its pathway is porphyrin-containing compound metabolism; protoporphyrin-IX biosynthesis; coproporphyrinogen-III from 5-aminolevulinate: step 4/4. Functionally, catalyzes the decarboxylation of four acetate groups of uroporphyrinogen-III to yield coproporphyrinogen-III. This is Uroporphyrinogen decarboxylase from Helicobacter acinonychis (strain Sheeba).